Consider the following 287-residue polypeptide: Glutamate racemase (287 aa).

Polar residues predominate over residues 1-15 (MATKPQDANTTSREA). Residues 1–25 (MATKPQDANTTSREAITSKADSPPR) are disordered. Residues 32 to 33 (DS) and 64 to 65 (YG) each bind substrate. The active-site Proton donor/acceptor is Cys-96. 97 to 98 (NT) is a binding site for substrate. Cys-208 serves as the catalytic Proton donor/acceptor. 209–210 (TH) contributes to the substrate binding site.

This sequence belongs to the aspartate/glutamate racemases family.

It catalyses the reaction L-glutamate = D-glutamate. The protein operates within cell wall biogenesis; peptidoglycan biosynthesis. In terms of biological role, provides the (R)-glutamate required for cell wall biosynthesis. The sequence is that of Glutamate racemase from Yersinia pseudotuberculosis serotype IB (strain PB1/+).